The sequence spans 274 residues: MQELQPIIEEAFERRADITPRNATPQVKDAVMAVIDLLDMGQLRVAERTDGQNWTTNQWVKKAVLLSFRLEDNAFIKGGYTNYYDKVPSKFADFNSKDFREGGFRVVPPAAARKGSYIGKNVVLMPSYVNIGAYVDEGTMVDTWATVGSCAQIGKNVHLSGGVGIGGVLEPVQANPTIIGDNCFIGARSEVVEGVIVEDNCVISMGVYIGQSTKIYDRETGEIHYGRVPAGSVVVSGNLPSKDGSYSLYCAVIVKKVDAKTLSKVGINELLRGI.

Residues R105 and D142 each coordinate substrate.

Belongs to the transferase hexapeptide repeat family. In terms of assembly, homotrimer.

It is found in the cytoplasm. The catalysed reaction is (S)-2,3,4,5-tetrahydrodipicolinate + succinyl-CoA + H2O = (S)-2-succinylamino-6-oxoheptanedioate + CoA. The protein operates within amino-acid biosynthesis; L-lysine biosynthesis via DAP pathway; LL-2,6-diaminopimelate from (S)-tetrahydrodipicolinate (succinylase route): step 1/3. In Thiobacillus denitrificans (strain ATCC 25259 / T1), this protein is 2,3,4,5-tetrahydropyridine-2,6-dicarboxylate N-succinyltransferase.